Reading from the N-terminus, the 475-residue chain is Fez family zinc finger protein 1 (475 aa).

The Engrailed homology 1 repressor motif lies at 28–43; it reads PLAFSIERIMARTPEP. C2H2-type zinc fingers lie at residues 260-282, 288-310, 316-338, 344-366, 372-394, and 400-423; these read FTCE…MPVH, FVCK…KIIH, HKCN…TRIH, FVCE…KLTH, FKCN…MHTH, and FTCP…RKLH. A disordered region spans residues 428-475; it reads GLARTPAGEPGTEPPPPLPQQPPMTLPPLQPPLPTPGPLQPGLHQGHQ. Residues 439 to 466 show a composition bias toward pro residues; sequence TEPPPPLPQQPPMTLPPLQPPLPTPGPL.

It belongs to the krueppel C2H2-type zinc-finger protein family. Expressed in brain. Little or no expression in other tissues. Overexpressed specifically in gastric cancers. A 2- to 20-fold increase is found in over 50% of gastric cancer tissues.

It is found in the nucleus. Transcription repressor. Involved in the axonal projection and proper termination of olfactory sensory neurons (OSN). Plays a role in rostro-caudal patterning of the diencephalon and in prethalamic formation. Expression is required in OSN to cell-autonomously regulate OSN axon projections. Regulates non-cell-autonomously the layer formation of the olfactory bulb development and the interneurons. May be required for correct rostral migration of the interneuron progenitors. The sequence is that of Fez family zinc finger protein 1 (FEZF1) from Homo sapiens (Human).